The sequence spans 74 residues: Progonadoliberin-3 (74 aa).

A signal peptide spans 1–15 (VRVVVLALVAQVTLS). A Pyrrolidone carboxylic acid modification is found at Gln-16. Gly-25 bears the Glycine amide mark.

It belongs to the GnRH family.

It localises to the secreted. In terms of biological role, stimulates the secretion of gonadotropins. The chain is Progonadoliberin-3 (gnrh3) from Oncorhynchus tshawytscha (Chinook salmon).